Reading from the N-terminus, the 346-residue chain is Hydroxymethylglutaryl-CoA synthase (346 aa).

Aspartate 28 contacts (3S)-3-hydroxy-3-methylglutaryl-CoA. Glutamate 80 serves as the catalytic Proton donor/acceptor. The (3S)-3-hydroxy-3-methylglutaryl-CoA site is built by cysteine 112 and threonine 153. The Acyl-thioester intermediate role is filled by cysteine 112. Residue arginine 199 participates in CoA binding. The (3S)-3-hydroxy-3-methylglutaryl-CoA site is built by threonine 201 and histidine 234. The active-site Proton donor/acceptor is histidine 234. Lysine 239 is a binding site for CoA. Residues arginine 243, asparagine 266, and serine 296 each contribute to the (3S)-3-hydroxy-3-methylglutaryl-CoA site.

Belongs to the thiolase-like superfamily. Archaeal HMG-CoA synthase family. As to quaternary structure, interacts with acetoacetyl-CoA thiolase that catalyzes the precedent step in the pathway and with a DUF35 protein. The acetoacetyl-CoA thiolase/HMG-CoA synthase complex channels the intermediate via a fused CoA-binding site, which allows for efficient coupling of the endergonic thiolase reaction with the exergonic HMGCS reaction.

It catalyses the reaction acetoacetyl-CoA + acetyl-CoA + H2O = (3S)-3-hydroxy-3-methylglutaryl-CoA + CoA + H(+). It functions in the pathway metabolic intermediate biosynthesis; (R)-mevalonate biosynthesis; (R)-mevalonate from acetyl-CoA: step 2/3. Functionally, catalyzes the condensation of acetyl-CoA with acetoacetyl-CoA to form 3-hydroxy-3-methylglutaryl-CoA (HMG-CoA). Functions in the mevalonate (MVA) pathway leading to isopentenyl diphosphate (IPP), a key precursor for the biosynthesis of isoprenoid compounds that are building blocks of archaeal membrane lipids. The chain is Hydroxymethylglutaryl-CoA synthase from Methanosphaera stadtmanae (strain ATCC 43021 / DSM 3091 / JCM 11832 / MCB-3).